The sequence spans 457 residues: Glutamyl-tRNA reductase (457 aa).

Residues 49-52 (TCNR), serine 109, 114-116 (ETQ), and glutamine 120 contribute to the substrate site. Cysteine 50 serves as the catalytic Nucleophile. 189–194 (GAGKMG) is an NADP(+) binding site.

The protein belongs to the glutamyl-tRNA reductase family. Homodimer.

The catalysed reaction is (S)-4-amino-5-oxopentanoate + tRNA(Glu) + NADP(+) = L-glutamyl-tRNA(Glu) + NADPH + H(+). It participates in porphyrin-containing compound metabolism; protoporphyrin-IX biosynthesis; 5-aminolevulinate from L-glutamyl-tRNA(Glu): step 1/2. In terms of biological role, catalyzes the NADPH-dependent reduction of glutamyl-tRNA(Glu) to glutamate 1-semialdehyde (GSA). The polypeptide is Glutamyl-tRNA reductase (Oceanobacillus iheyensis (strain DSM 14371 / CIP 107618 / JCM 11309 / KCTC 3954 / HTE831)).